Reading from the N-terminus, the 515-residue chain is Probable cytosol aminopeptidase (515 aa).

Positions 279 and 284 each coordinate Mn(2+). Lys291 is a catalytic residue. Mn(2+) is bound by residues Asp302, Asp361, and Glu363. Arg365 is a catalytic residue.

This sequence belongs to the peptidase M17 family. It depends on Mn(2+) as a cofactor.

It localises to the cytoplasm. The enzyme catalyses Release of an N-terminal amino acid, Xaa-|-Yaa-, in which Xaa is preferably Leu, but may be other amino acids including Pro although not Arg or Lys, and Yaa may be Pro. Amino acid amides and methyl esters are also readily hydrolyzed, but rates on arylamides are exceedingly low.. It catalyses the reaction Release of an N-terminal amino acid, preferentially leucine, but not glutamic or aspartic acids.. Its function is as follows. Presumably involved in the processing and regular turnover of intracellular proteins. Catalyzes the removal of unsubstituted N-terminal amino acids from various peptides. This chain is Probable cytosol aminopeptidase, found in Mycobacterium bovis (strain ATCC BAA-935 / AF2122/97).